We begin with the raw amino-acid sequence, 43 residues long: Protein PsbN (43 aa).

The helical transmembrane segment at 7 to 27 (LSIAIGSILLVITGFAIYTAF) threads the bilayer.

It belongs to the PsbN family.

The protein localises to the cellular thylakoid membrane. In terms of biological role, may play a role in photosystem I and II biogenesis. The polypeptide is Protein PsbN (Crocosphaera subtropica (strain ATCC 51142 / BH68) (Cyanothece sp. (strain ATCC 51142))).